Consider the following 417-residue polypeptide: Dihydrolipoyllysine-residue succinyltransferase component of 2-oxoglutarate dehydrogenase complex (417 aa).

One can recognise a Lipoyl-binding domain in the interval 1 to 76; that stretch reads MAEIKVPELA…QVGEIIGTIS (76 aa). The residue at position 42 (K42) is an N6-lipoyllysine. A disordered region spans residues 75–191; it reads ISEGAGESSA…SFDKPVEVQK (117 aa). 2 stretches are compositionally biased toward basic and acidic residues: residues 89–103 and 152–163; these read EKTE…EKQA and RKQDVEAYEKPA. Residues 123–160 enclose the Peripheral subunit-binding (PSBD) domain; it reads IASPSARKLAREKGIDLSQVPTGDPLGRVRKQDVEAYE. Low complexity predominate over residues 164-182; sequence SKPAPQQKQQPQAQKAQQS. Catalysis depends on residues H388 and D392.

The protein belongs to the 2-oxoacid dehydrogenase family. As to quaternary structure, forms a 24-polypeptide structural core with octahedral symmetry. Part of the 2-oxoglutarate dehydrogenase (OGDH) complex composed of E1 (2-oxoglutarate dehydrogenase), E2 (dihydrolipoamide succinyltransferase) and E3 (dihydrolipoamide dehydrogenase); the complex contains multiple copies of the three enzymatic components (E1, E2 and E3). Requires (R)-lipoate as cofactor.

The enzyme catalyses N(6)-[(R)-dihydrolipoyl]-L-lysyl-[protein] + succinyl-CoA = N(6)-[(R)-S(8)-succinyldihydrolipoyl]-L-lysyl-[protein] + CoA. The protein operates within amino-acid degradation; L-lysine degradation via saccharopine pathway; glutaryl-CoA from L-lysine: step 6/6. E2 component of the 2-oxoglutarate dehydrogenase (OGDH) complex which catalyzes the second step in the conversion of 2-oxoglutarate to succinyl-CoA and CO(2). The protein is Dihydrolipoyllysine-residue succinyltransferase component of 2-oxoglutarate dehydrogenase complex (odhB) of Bacillus subtilis (strain 168).